The primary structure comprises 257 residues: Acetylglutamate kinase (257 aa).

Residues 43–44 (GG), Arg65, and Asn157 each bind substrate. ATP is bound by residues 180–185 (DVSGIL) and 208–210 (IIT).

It belongs to the acetylglutamate kinase family. ArgB subfamily. Homodimer.

Its subcellular location is the cytoplasm. It carries out the reaction N-acetyl-L-glutamate + ATP = N-acetyl-L-glutamyl 5-phosphate + ADP. The protein operates within amino-acid biosynthesis; L-arginine biosynthesis; N(2)-acetyl-L-ornithine from L-glutamate: step 2/4. Functionally, catalyzes the ATP-dependent phosphorylation of N-acetyl-L-glutamate. The chain is Acetylglutamate kinase from Enterobacter sp. (strain 638).